The sequence spans 204 residues: Large ribosomal subunit protein uL4 (204 aa).

The interval 53 to 73 (AFVSGGGKKPWRQKGRGGARA) is disordered.

It belongs to the universal ribosomal protein uL4 family. Part of the 50S ribosomal subunit.

In terms of biological role, one of the primary rRNA binding proteins, this protein initially binds near the 5'-end of the 23S rRNA. It is important during the early stages of 50S assembly. It makes multiple contacts with different domains of the 23S rRNA in the assembled 50S subunit and ribosome. Functionally, forms part of the polypeptide exit tunnel. The sequence is that of Large ribosomal subunit protein uL4 from Campylobacter concisus (strain 13826).